We begin with the raw amino-acid sequence, 167 residues long: SAR-endolysin (167 aa).

A helical; Signal-anchor for type II membrane protein transmembrane segment spans residues 10 to 32 (SVMAAISGGAIAIASVLITGPGG). Residues Glu-37 and Asp-46 each act as proton donor/acceptor in the active site.

Belongs to the glycosyl hydrolase 24 family.

The protein resides in the host cell inner membrane. The enzyme catalyses Hydrolysis of (1-&gt;4)-beta-linkages between N-acetylmuramic acid and N-acetyl-D-glucosamine residues in a peptidoglycan and between N-acetyl-D-glucosamine residues in chitodextrins.. In terms of biological role, signal-arrest-release (SAR) endolysin with lysozyme activity that degrades host peptidoglycans and participates with the pinholin and spanin proteins in the sequential events which lead to programmed host cell lysis releasing the mature viral particles. Once the pinholin has permeabilized the host cell membrane, the SAR-endolysin is released into the periplasm where it breaks down the peptidoglycan layer. This Bacteriophage PS119 protein is SAR-endolysin (19).